The following is a 457-amino-acid chain: tRNA (guanine(37)-N(1))-methyltransferase (457 aa).

S-adenosyl-L-methionine-binding positions include His-240, 278–279 (DL), 306–307 (DG), and Asn-338.

It belongs to the class I-like SAM-binding methyltransferase superfamily. TRM5/TYW2 family. Monomer.

Its subcellular location is the mitochondrion matrix. It localises to the nucleus. It is found in the cytoplasm. The catalysed reaction is guanosine(37) in tRNA + S-adenosyl-L-methionine = N(1)-methylguanosine(37) in tRNA + S-adenosyl-L-homocysteine + H(+). Its function is as follows. Specifically methylates the N1 position of guanosine-37 in various cytoplasmic and mitochondrial tRNAs. Methylation is not dependent on the nature of the nucleoside 5' of the target nucleoside. This is the first step in the biosynthesis of wybutosine (yW), a modified base adjacent to the anticodon of tRNAs and required for accurate decoding. This Drosophila melanogaster (Fruit fly) protein is tRNA (guanine(37)-N(1))-methyltransferase.